Reading from the N-terminus, the 502-residue chain is ATP synthase subunit alpha (502 aa).

Residue 169–176 coordinates ATP; that stretch reads GDRQTGKT.

It belongs to the ATPase alpha/beta chains family. As to quaternary structure, F-type ATPases have 2 components, CF(1) - the catalytic core - and CF(0) - the membrane proton channel. CF(1) has five subunits: alpha(3), beta(3), gamma(1), delta(1), epsilon(1). CF(0) has three main subunits: a(1), b(2) and c(9-12). The alpha and beta chains form an alternating ring which encloses part of the gamma chain. CF(1) is attached to CF(0) by a central stalk formed by the gamma and epsilon chains, while a peripheral stalk is formed by the delta and b chains. The F(1)F(0) complex interacts with SpoIIIJ and YqjG; YqgA is found in the same complex.

The protein resides in the cell membrane. Its subcellular location is the membrane raft. It catalyses the reaction ATP + H2O + 4 H(+)(in) = ADP + phosphate + 5 H(+)(out). Functionally, produces ATP from ADP in the presence of a proton gradient across the membrane. The alpha chain is a regulatory subunit. In Bacillus subtilis (strain 168), this protein is ATP synthase subunit alpha.